The sequence spans 420 residues: MESHLGNGVGSSRSAKNTKNTSSSVDWLSRDMLEMKIRDKTEADEERDSEPDIIDGVGAEPGHVITTTLPGRNGQSRQTVSYIAEHVVGTGSFGMVFQAKCRETGEVVAIKKVLQDKRYKNRELQIMQMLDHPNVVCLKHSFYSRTENEEVYLNLVLEFVPETVNRTARSYSRMNQLMPLIYVKLYTYQICRGLAYLHNCCGLCHRDIKPQNLLVNPHTHQLKICDFGSAKVLVKGEPNISYICSRYYRAPELIFGATEYTTAIDIWSTGCVMAELLLGQPLFPGESGVDQLVEIIKVLGTPTREEIKCMNPNYTEFKFPQIKPHPWHKVFQKRLPPEAVDLLCRFFQYSPNLRCTAVEACIHPFFDELRDPNARLPNGRPLPPLFNFKPQELSGIPPETVDRLVPEHARKQNHFMALHS.

A disordered region spans residues 1–61; sequence MESHLGNGVG…DIIDGVGAEP (61 aa). Polar residues predominate over residues 10-26; that stretch reads GSSRSAKNTKNTSSSVD. Over residues 28–41 the composition is skewed to basic and acidic residues; that stretch reads LSRDMLEMKIRDKT. Residues 42 to 53 show a composition bias toward acidic residues; the sequence is EADEERDSEPDI. The Protein kinase domain occupies 82–366; it reads YIAEHVVGTG…AVEACIHPFF (285 aa). Residues 88 to 96 and lysine 111 contribute to the ATP site; that span reads VGTGSFGMV. Residue aspartate 207 is the Proton acceptor of the active site. Tyrosine 242 carries the post-translational modification Phosphotyrosine.

Belongs to the protein kinase superfamily. CMGC Ser/Thr protein kinase family. GSK-3 subfamily. In terms of processing, autophosphorylated mainly on threonine and serine residues.

The enzyme catalyses L-seryl-[protein] + ATP = O-phospho-L-seryl-[protein] + ADP + H(+). It catalyses the reaction L-threonyl-[protein] + ATP = O-phospho-L-threonyl-[protein] + ADP + H(+). In terms of biological role, may mediate extracellular signals to regulate transcription in differentiating cells. The polypeptide is Shaggy-related protein kinase delta (ASK4) (Arabidopsis thaliana (Mouse-ear cress)).